A 472-amino-acid polypeptide reads, in one-letter code: Sarcalumenin (472 aa).

The first 20 residues, 1-20 (MKRLNLLCCCVASLLLLGTA), serve as a signal peptide directing secretion. Leu-59 carries N-linked (GlcNAc...) asparagine glycosylation. Residues 89–330 (ITSKPMVLFL…IENRMENKIA (242 aa)) form the Dynamin-type G domain. A G1 motif region spans residues 99-106 (GPWSVGKS). Residues 127–128 (EP) form a G2 motif region. A G3 motif region spans residues 189-192 (DTPG). A G4 motif region spans residues 254 to 257 (NKAD). Residue Leu-278 is a region of interest, G5 motif. 2 N-linked (GlcNAc...) asparagine glycosylation sites follow: Asn-280 and Asn-388.

Belongs to the TRAFAC class dynamin-like GTPase superfamily. Dynamin/Fzo/YdjA family. N-glycosylated.

The protein resides in the sarcoplasmic reticulum lumen. It is found in the sarcoplasmic reticulum membrane. The sequence is that of Sarcalumenin (SRL) from Gallus gallus (Chicken).